The chain runs to 189 residues: MARLCAFLMVLAVLSYWPTCSLGCDLPQTHNLRNKRALTLLVQMRRLSPLSCLKDRKDFGFPQEKVDAQQIKKAQAIPVLSELTQQILNIFTSKDSSAAWNTTLLDSFCNDLHQQLNDLQGCLMQQVGVQEFPLTQEDALLAVRKYFHRITVYLREKKHSPCAWEVVRAEVWRALSSSANVLGRLREEK.

Positions 1-23 are cleaved as a signal peptide; sequence MARLCAFLMVLAVLSYWPTCSLG. Disulfide bonds link cysteine 24–cysteine 122 and cysteine 52–cysteine 162. N-linked (GlcNAc...) asparagine glycosylation occurs at asparagine 101.

The protein belongs to the alpha/beta interferon family. In terms of assembly, interacts with CR2. Post-translationally, glycosylated.

It is found in the secreted. Functionally, produced by macrophages, IFN-alpha have antiviral activities. Interferon stimulates the production of two enzymes: a protein kinase and an oligoadenylate synthetase. The protein is Interferon alpha-1 (Ifna1) of Mus musculus (Mouse).